The sequence spans 209 residues: Orotate phosphoribosyltransferase (209 aa).

Residues Arg96, Lys100, His102, and 122 to 130 (EDLISTGGS) each bind 5-phospho-alpha-D-ribose 1-diphosphate. Residue Ser126 coordinates orotate.

It belongs to the purine/pyrimidine phosphoribosyltransferase family. PyrE subfamily. Homodimer. It depends on Mg(2+) as a cofactor.

It carries out the reaction orotidine 5'-phosphate + diphosphate = orotate + 5-phospho-alpha-D-ribose 1-diphosphate. Its pathway is pyrimidine metabolism; UMP biosynthesis via de novo pathway; UMP from orotate: step 1/2. Functionally, catalyzes the transfer of a ribosyl phosphate group from 5-phosphoribose 1-diphosphate to orotate, leading to the formation of orotidine monophosphate (OMP). The polypeptide is Orotate phosphoribosyltransferase (Listeria monocytogenes serovar 1/2a (strain ATCC BAA-679 / EGD-e)).